A 383-amino-acid chain; its full sequence is Chaperone protein DnaJ (383 aa).

The J domain maps to 6-70; sequence DYYDVLGVGR…QKRAAYDQYG (65 aa). The CR-type zinc finger occupies 140-222; the sequence is GKETKISYSR…CHGTGREEER (83 aa). Residues Cys153, Cys156, Cys170, Cys173, Cys196, Cys199, Cys210, and Cys213 each contribute to the Zn(2+) site. CXXCXGXG motif repeat units lie at residues 153–160, 170–177, 196–203, and 210–217; these read CHTCHGSG, CHKCHGAG, CDVCGGTG, and CDTCHGTG.

This sequence belongs to the DnaJ family. Homodimer. Requires Zn(2+) as cofactor.

It is found in the cytoplasm. Its function is as follows. Participates actively in the response to hyperosmotic and heat shock by preventing the aggregation of stress-denatured proteins and by disaggregating proteins, also in an autonomous, DnaK-independent fashion. Unfolded proteins bind initially to DnaJ; upon interaction with the DnaJ-bound protein, DnaK hydrolyzes its bound ATP, resulting in the formation of a stable complex. GrpE releases ADP from DnaK; ATP binding to DnaK triggers the release of the substrate protein, thus completing the reaction cycle. Several rounds of ATP-dependent interactions between DnaJ, DnaK and GrpE are required for fully efficient folding. Also involved, together with DnaK and GrpE, in the DNA replication of plasmids through activation of initiation proteins. This chain is Chaperone protein DnaJ, found in Latilactobacillus sakei (Lactobacillus sakei).